We begin with the raw amino-acid sequence, 76 residues long: Large ribosomal subunit protein uL30 (76 aa).

It belongs to the universal ribosomal protein uL30 family. In terms of assembly, part of the 50S ribosomal subunit.

In Anaeromyxobacter dehalogenans (strain 2CP-1 / ATCC BAA-258), this protein is Large ribosomal subunit protein uL30.